A 286-amino-acid polypeptide reads, in one-letter code: ATP synthase gamma chain (286 aa).

The protein belongs to the ATPase gamma chain family. F-type ATPases have 2 components, CF(1) - the catalytic core - and CF(0) - the membrane proton channel. CF(1) has five subunits: alpha(3), beta(3), gamma(1), delta(1), epsilon(1). CF(0) has three main subunits: a, b and c.

The protein localises to the cell membrane. In terms of biological role, produces ATP from ADP in the presence of a proton gradient across the membrane. The gamma chain is believed to be important in regulating ATPase activity and the flow of protons through the CF(0) complex. This chain is ATP synthase gamma chain, found in Oceanobacillus iheyensis (strain DSM 14371 / CIP 107618 / JCM 11309 / KCTC 3954 / HTE831).